The sequence spans 124 residues: Ribonuclease pancreatic (124 aa).

A compositionally biased stretch (basic and acidic residues) spans K1–M13. A disordered region spans residues K1 to N24. The substrate site is built by K7 and R10. Catalysis depends on H12, which acts as the Proton acceptor. 4 cysteine pairs are disulfide-bonded: C26/C84, C40/C95, C58/C110, and C65/C72. Substrate is bound by residues K41–T45, K66, and R85. Catalysis depends on H119, which acts as the Proton donor.

It belongs to the pancreatic ribonuclease family. As to quaternary structure, monomer. Interacts with and forms tight 1:1 complexes with RNH1. Dimerization of two such complexes may occur. Interaction with RNH1 inhibits this protein. In terms of tissue distribution, pancreas.

Its subcellular location is the secreted. It carries out the reaction an [RNA] containing cytidine + H2O = an [RNA]-3'-cytidine-3'-phosphate + a 5'-hydroxy-ribonucleotide-3'-[RNA].. The catalysed reaction is an [RNA] containing uridine + H2O = an [RNA]-3'-uridine-3'-phosphate + a 5'-hydroxy-ribonucleotide-3'-[RNA].. In terms of biological role, endonuclease that catalyzes the cleavage of RNA on the 3' side of pyrimidine nucleotides. Acts on single-stranded and double-stranded RNA. The protein is Ribonuclease pancreatic (RNASE1) of Boselaphus tragocamelus (Nilgai).